The primary structure comprises 102 residues: Flagellar hook-basal body complex protein FliE (102 aa).

The protein belongs to the FliE family.

It is found in the bacterial flagellum basal body. This Oceanobacillus iheyensis (strain DSM 14371 / CIP 107618 / JCM 11309 / KCTC 3954 / HTE831) protein is Flagellar hook-basal body complex protein FliE.